Here is a 113-residue protein sequence, read N- to C-terminus: Large ribosomal subunit protein bL19 (113 aa).

Belongs to the bacterial ribosomal protein bL19 family.

Its function is as follows. This protein is located at the 30S-50S ribosomal subunit interface and may play a role in the structure and function of the aminoacyl-tRNA binding site. In Carboxydothermus hydrogenoformans (strain ATCC BAA-161 / DSM 6008 / Z-2901), this protein is Large ribosomal subunit protein bL19.